Reading from the N-terminus, the 173-residue chain is Protein tyrosine phosphatase type IVA 1 (173 aa).

The Tyrosine-protein phosphatase domain maps to 8 to 161 (APVEVTYKNM…YRPKMRLRFK (154 aa)). A disulfide bridge links Cys-49 with Cys-104. Asp-72 serves as the catalytic Proton donor. Residues 97–132 (GCCIAVHCVAGLGRAPVLVALALIEGGMKYEDAVQF) form an interaction with ATF5 region. The active-site Phosphocysteine intermediate is the Cys-104. 105 to 110 (VAGLGR) is a phosphate binding site. Arg-110 is a binding site for substrate. Cysteine methyl ester is present on Cys-170. A lipid anchor (S-farnesyl cysteine) is attached at Cys-170. Positions 171 to 173 (CIQ) are cleaved as a propeptide — removed in mature form.

This sequence belongs to the protein-tyrosine phosphatase family. Homotrimer. Interacts with ATF5. Interacts with tubulin. Farnesylated. Farnesylation is required for membrane targeting. Unfarnesylated forms are shifted into the nucleus. In terms of tissue distribution, expressed in bone marrow, lymph nodes, T lymphocytes, spleen, thymus and tonsil. Overexpressed in tumor cell lines.

Its subcellular location is the cell membrane. The protein resides in the early endosome. It localises to the endoplasmic reticulum. It is found in the cytoplasm. The protein localises to the cytoskeleton. Its subcellular location is the spindle. The protein resides in the nucleus. It catalyses the reaction O-phospho-L-tyrosyl-[protein] + H2O = L-tyrosyl-[protein] + phosphate. With respect to regulation, inhibited by sodium orthovanadate and pentamidine. In terms of biological role, protein tyrosine phosphatase which stimulates progression from G1 into S phase during mitosis. May play a role in the development and maintenance of differentiating epithelial tissues. Enhances cell proliferation, cell motility and invasive activity, and promotes cancer metastasis. This is Protein tyrosine phosphatase type IVA 1 (PTP4A1) from Homo sapiens (Human).